The sequence spans 455 residues: tRNA modification GTPase MnmE (455 aa).

3 residues coordinate (6S)-5-formyl-5,6,7,8-tetrahydrofolate: Arg24, Glu81, and Lys120. The TrmE-type G domain maps to 216–378 (GMTVVIAGRP…LREHLKACMG (163 aa)). Asn226 is a binding site for K(+). GTP contacts are provided by residues 226–231 (NAGKSS), 245–251 (TDIAGTT), 270–273 (DTAG), 335–338 (NKAD), and 359–361 (SAR). Ser230 is a Mg(2+) binding site. K(+) contacts are provided by Thr245, Ile247, and Thr250. Mg(2+) is bound at residue Thr251. (6S)-5-formyl-5,6,7,8-tetrahydrofolate is bound at residue Lys455.

Belongs to the TRAFAC class TrmE-Era-EngA-EngB-Septin-like GTPase superfamily. TrmE GTPase family. Homodimer. Heterotetramer of two MnmE and two MnmG subunits. K(+) serves as cofactor.

The protein resides in the cytoplasm. Exhibits a very high intrinsic GTPase hydrolysis rate. Involved in the addition of a carboxymethylaminomethyl (cmnm) group at the wobble position (U34) of certain tRNAs, forming tRNA-cmnm(5)s(2)U34. In Pseudomonas aeruginosa (strain UCBPP-PA14), this protein is tRNA modification GTPase MnmE.